The following is a 520-amino-acid chain: Ribonuclease Y (520 aa).

Residues 5–25 traverse the membrane as a helical segment; that stretch reads ITIISSLLFLIVGLVVGSLIF. A disordered region spans residues 70-127; the sequence is RTEIENELRGRRTETQKAENRLLQREENLDRKDTSLSKREATLERKEESISKRQQQIE. The KH domain occupies 210–273; sequence TVSVVTLPND…EIARIALEKL (64 aa). Residues 336-429 enclose the HD domain; it reads VLNHSLEVSK…VAAADALSAA (94 aa).

Belongs to the RNase Y family.

Its subcellular location is the cell membrane. Functionally, endoribonuclease that initiates mRNA decay. This chain is Ribonuclease Y, found in Listeria welshimeri serovar 6b (strain ATCC 35897 / DSM 20650 / CCUG 15529 / CIP 8149 / NCTC 11857 / SLCC 5334 / V8).